Consider the following 287-residue polypeptide: Probable glucose uptake protein GlcU (287 aa).

9 helical membrane-spanning segments follow: residues Leu7–Gly29, Ile34–Phe56, Asn58–Gly75, Trp114–Leu136, Met156–Val178, Ala183–His202, Thr209–Tyr228, Val233–Phe255, and Thr267–Leu286.

Belongs to the GRP transporter (TC 2.A.7.5) family.

The protein localises to the cell membrane. In terms of biological role, involved in the uptake of glucose. In Staphylococcus aureus (strain MRSA252), this protein is Probable glucose uptake protein GlcU (glcU).